The primary structure comprises 139 residues: MAMTVHCDIVSAEGEIFSGLVEMVVAHGNLGDLGIAPGHAPLITNLKPGPITLTKQGGAQEVYYISGGFLEVQPNMVKVLADTVQRATDLDEAQAQEALKAAENALSLKGADFDYGAAAARLAEAAAQLRTVQQMRKGK.

The protein belongs to the ATPase epsilon chain family. In terms of assembly, F-type ATPases have 2 components, CF(1) - the catalytic core - and CF(0) - the membrane proton channel. CF(1) has five subunits: alpha(3), beta(3), gamma(1), delta(1), epsilon(1). CF(0) has three main subunits: a, b and c.

Its subcellular location is the cell inner membrane. Its function is as follows. Produces ATP from ADP in the presence of a proton gradient across the membrane. The polypeptide is ATP synthase epsilon chain (Pseudomonas putida (strain W619)).